A 2123-amino-acid polypeptide reads, in one-letter code: Toxin Afp18 (2123 aa).

Positions 864 to 919 (FFDNSDQDADQPRVRRKREMTDEIMLSDGSSRSEAKALPDENELDTDQSKSRPESA) are disordered. The interval 1771–2123 (VFDSANTNRS…GNSTQSSGLS (353 aa)) is tyrosine glycosyltransferase. UDP-N-acetyl-alpha-D-glucosamine-binding positions include 1850–1852 (IWV) and 1940–1941 (SD). Positions 1957 and 1959 each coordinate a divalent metal cation. A DxDD motif motif is present at residues 1957–1960 (DIDD). Residue asparagine 1993 coordinates UDP-N-acetyl-alpha-D-glucosamine.

The cofactor is a divalent metal cation.

The protein resides in the secreted. It is found in the host cell membrane. It catalyses the reaction L-tyrosyl-[protein] + UDP-N-acetyl-alpha-D-glucosamine = O-(N-acetyl-alpha-D-glucosaminyl)-L-tyrosyl-[protein] + UDP + H(+). Functionally, toxin component of the prophage tail-derived protein translocation system Afp, which is the causative agent of enteric redmouth disease in salmonid fish species. Mono-O-GlcNAcylates the small GTPase RhoA in eukaryotic host cells at Tyr-34, using UDP-N-acetylglucosamine (UDP-GlcNAc) as the sugar donor. Glycosylation of RhoA results in impaired effector and regulator interaction and inactivation of downstream RhoA signaling which leads to actin filament depolymerization and blocks cytokinesis and gastrulation during zebrafish embryo development. To a lesser extent, is also able to glycosylate other Rho family GTPases (RhoB, RhoC, Rac1, Rac2, Rac3, and Cdc42) in vitro at a switch I tyrosine residue, but not Ras proteins. The protein is Toxin Afp18 of Yersinia ruckeri serotype O1 (strain ATCC 29473 / DSM 18506 / JCM 15110 / CCUG 14190 / NCIMB 2194 / NCTC 12986 / 2396-61).